Here is a 129-residue protein sequence, read N- to C-terminus: MGKAKFPRQLKDNEAKAVARTIRVSPQKLNLVAAMIRGKKVGAALADLTFSRKRIAGTVKKTLESAVANAENNHDLDIDSLVVAEAYVGKSIVMKRFHVRGRGRASRIERPFSHLTIIVREVIEKVEVA.

Belongs to the universal ribosomal protein uL22 family. Part of the 50S ribosomal subunit.

This protein binds specifically to 23S rRNA; its binding is stimulated by other ribosomal proteins, e.g. L4, L17, and L20. It is important during the early stages of 50S assembly. It makes multiple contacts with different domains of the 23S rRNA in the assembled 50S subunit and ribosome. Functionally, the globular domain of the protein is located near the polypeptide exit tunnel on the outside of the subunit, while an extended beta-hairpin is found that lines the wall of the exit tunnel in the center of the 70S ribosome. The protein is Large ribosomal subunit protein uL22 of Bartonella henselae (strain ATCC 49882 / DSM 28221 / CCUG 30454 / Houston 1) (Rochalimaea henselae).